A 366-amino-acid chain; its full sequence is Anhydro-N-acetylmuramic acid kinase (366 aa).

Glycine 12 to aspartate 19 contributes to the ATP binding site.

The protein belongs to the anhydro-N-acetylmuramic acid kinase family.

The catalysed reaction is 1,6-anhydro-N-acetyl-beta-muramate + ATP + H2O = N-acetyl-D-muramate 6-phosphate + ADP + H(+). The protein operates within amino-sugar metabolism; 1,6-anhydro-N-acetylmuramate degradation. It functions in the pathway cell wall biogenesis; peptidoglycan recycling. Functionally, catalyzes the specific phosphorylation of 1,6-anhydro-N-acetylmuramic acid (anhMurNAc) with the simultaneous cleavage of the 1,6-anhydro ring, generating MurNAc-6-P. Is required for the utilization of anhMurNAc either imported from the medium or derived from its own cell wall murein, and thus plays a role in cell wall recycling. The chain is Anhydro-N-acetylmuramic acid kinase from Nitrosospira multiformis (strain ATCC 25196 / NCIMB 11849 / C 71).